The primary structure comprises 576 residues: Eukaryotic translation initiation factor 2A (576 aa).

WD repeat units follow at residues 71 to 119 (LPAA…LVFS), 266 to 307 (DREG…VSII), 308 to 349 (PPAP…KKIT), and 351 to 396 (VEAA…MFYE). Disordered stretches follow at residues 422–461 (SASLPSPPTPHASASKLAAKPSVKPAGAYRPPGARGQNST) and 475–505 (GSANKHVNSSRQRVVPGATPVIDGNKKNNKK). The segment covering 475–486 (GSANKHVNSSRQ) has biased composition (polar residues).

The protein belongs to the WD repeat EIF2A family.

Its subcellular location is the cytoplasm. Functionally, functions in the early steps of protein synthesis of a small number of specific mRNAs. Acts by directing the binding of methionyl-tRNAi to 40S ribosomal subunits. In contrast to the eIF-2 complex, it binds methionyl-tRNAi to 40S subunits in a codon-dependent manner, whereas the eIF-2 complex binds methionyl-tRNAi to 40S subunits in a GTP-dependent manner. This Schizosaccharomyces pombe (strain 972 / ATCC 24843) (Fission yeast) protein is Eukaryotic translation initiation factor 2A.